Here is a 555-residue protein sequence, read N- to C-terminus: Formate--tetrahydrofolate ligase (555 aa).

65 to 72 (TPAGEGKS) is an ATP binding site.

The protein belongs to the formate--tetrahydrofolate ligase family.

The catalysed reaction is (6S)-5,6,7,8-tetrahydrofolate + formate + ATP = (6R)-10-formyltetrahydrofolate + ADP + phosphate. It participates in one-carbon metabolism; tetrahydrofolate interconversion. The sequence is that of Formate--tetrahydrofolate ligase from Staphylococcus aureus (strain bovine RF122 / ET3-1).